A 434-amino-acid chain; its full sequence is Na(+)/H(+) antiporter NhaA 1 (434 aa).

The next 11 membrane-spanning stretches (helical) occupy residues 34 to 54 (GLLLIAAATVAIVWANTPWSA), 73 to 93 (LTLGAWAADGLLAIFFFVAGL), 111 to 131 (ALPVVAAMGGMAVPALVYVLW), 141 to 161 (GWAIPTATDIAFAVAILAVIS), 171 to 191 (FLLTLAVVDDLLAITIIALFY), 194 to 214 (ELHLGYLAAAAVPLLVFALLV), 233 to 253 (VLVHESGVHATVAGVLLGFAV), 278 to 298 (SAGLAVPVFAFFAAGVTVGGF), 313 to 333 (VVTGLVVGKTVGIAGSTWLLA), 346 to 366 (WVDVVGLAMLAGIGFTVSLLI), and 380 to 400 (HVKVGVLVGSLAATALATGVL).

This sequence belongs to the NhaA Na(+)/H(+) (TC 2.A.33) antiporter family.

The protein resides in the cell membrane. The catalysed reaction is Na(+)(in) + 2 H(+)(out) = Na(+)(out) + 2 H(+)(in). Its function is as follows. Na(+)/H(+) antiporter that extrudes sodium in exchange for external protons. The chain is Na(+)/H(+) antiporter NhaA 1 from Nocardioides sp. (strain ATCC BAA-499 / JS614).